Consider the following 859-residue polypeptide: Bifunctional levopimaradiene synthase, chloroplastic (859 aa).

A chloroplast-targeting transit peptide spans M1–R52. Residues D392, D394, D611, D615, N755, and E763 each contribute to the Mg(2+) site. The DXDD motif signature appears at D392–D395. The DDXXD motif signature appears at D611–D615.

This sequence belongs to the terpene synthase family. Tpsd subfamily. Requires Mg(2+) as cofactor. Mn(2+) serves as cofactor.

The protein localises to the plastid. It localises to the chloroplast. The catalysed reaction is (+)-copalyl diphosphate = abieta-8(14),12-diene + diphosphate. The enzyme catalyses (+)-copalyl diphosphate = abieta-7,13-diene + diphosphate. It functions in the pathway secondary metabolite biosynthesis; terpenoid biosynthesis. The protein operates within terpene metabolism; oleoresin biosynthesis. Terpene synthase (di-TPS) involved in the biosynthesis of diterpene natural products included in conifer oleoresin secretions and volatile emissions; these compounds contribute to biotic and abiotic stress defense against herbivores and pathogens. Catalyzes the conversion of (+)-copalyl diphosphate ((+)-CPP) to isopimaradiene. This is Bifunctional levopimaradiene synthase, chloroplastic from Picea sitchensis (Sitka spruce).